Here is a 609-residue protein sequence, read N- to C-terminus: Aspartate--tRNA(Asp/Asn) ligase (609 aa).

Glu-175 contributes to the L-aspartate binding site. The aspartate stretch occupies residues 199-202 (QQFK). The L-aspartate site is built by Arg-221 and His-468. 221 to 223 (RDE) is a binding site for ATP. ATP is bound at residue Glu-502. L-aspartate is bound at residue Arg-509. 554 to 557 (GIDR) is a binding site for ATP.

This sequence belongs to the class-II aminoacyl-tRNA synthetase family. Type 1 subfamily. In terms of assembly, homodimer.

The protein resides in the cytoplasm. The catalysed reaction is tRNA(Asx) + L-aspartate + ATP = L-aspartyl-tRNA(Asx) + AMP + diphosphate. Its function is as follows. Aspartyl-tRNA synthetase with relaxed tRNA specificity since it is able to aspartylate not only its cognate tRNA(Asp) but also tRNA(Asn). Reaction proceeds in two steps: L-aspartate is first activated by ATP to form Asp-AMP and then transferred to the acceptor end of tRNA(Asp/Asn). This Caulobacter sp. (strain K31) protein is Aspartate--tRNA(Asp/Asn) ligase.